Reading from the N-terminus, the 325-residue chain is Small ribosomal subunit protein uS3 (325 aa).

Positions 38-106 constitute a KH type-2 domain; sequence IRKMMSKGME…QVQLNILEVK (69 aa). Residues 217–325 form a disordered region; that stretch reads EALLRQQRRE…AQGAPEKAEG (109 aa). Over residues 222–232 the composition is skewed to basic residues; the sequence is QQRRERPRRGP. The span at 285 to 316 shows a compositional bias: low complexity; that stretch reads TESAAVEGTPVETPAVTPETTAAPAAVTTAEA.

The protein belongs to the universal ribosomal protein uS3 family. As to quaternary structure, part of the 30S ribosomal subunit. Forms a tight complex with proteins S10 and S14.

Binds the lower part of the 30S subunit head. Binds mRNA in the 70S ribosome, positioning it for translation. The sequence is that of Small ribosomal subunit protein uS3 from Parafrankia sp. (strain EAN1pec).